The primary structure comprises 142 residues: Protein archease (142 aa).

Residues aspartate 12, aspartate 141, and leucine 142 each coordinate Ca(2+).

The protein belongs to the archease family.

Functionally, activates the tRNA-splicing ligase complex by facilitating the enzymatic turnover of catalytic subunit RtcB. Acts by promoting the guanylylation of RtcB, a key intermediate step in tRNA ligation. Can also alter the NTP specificity of RtcB such that ATP, dGTP or ITP is used efficiently. The sequence is that of Protein archease from Thermococcus gammatolerans (strain DSM 15229 / JCM 11827 / EJ3).